The sequence spans 151 residues: Neuroglobin (151 aa).

Residues 1–149 (MERPEQELIR…VVQAMSRGWD (149 aa)) form the Globin domain. Histidine 64 and histidine 96 together coordinate heme b.

Belongs to the globin family. Monomer. Homodimer and homotetramer; disulfide-linked. Mainly monomeric but also detected as part of homodimers and homotetramers. Interacts with 14-3-3 proteins; regulates the phosphorylation of NGB. Could interact (ferrous form) with G-alpha(i) proteins (GTP-bound form). In terms of processing, phosphorylated during hypoxia by ERK1/ERK2. Phosphorylation regulates the heme pocket hexacoordination preventing the association of His-64 with the heme metal center. Thereby, promotes the access of dioxygen and nitrite to the heme and stimulates the nitrite reductase activity. Phosphorylation during hypoxia is stabilized by 14-3-3 proteins.

The protein resides in the cytoplasm. It localises to the cytosol. It is found in the mitochondrion matrix. The enzyme catalyses Fe(III)-heme b-[protein] + nitric oxide + H2O = Fe(II)-heme b-[protein] + nitrite + 2 H(+). In terms of biological role, monomeric globin with a bis-histidyl six-coordinate heme-iron atom through which it can bind dioxygen, carbon monoxide and nitric oxide. Could help transport oxygen and increase its availability to the metabolically active neuronal tissues, though its low quantity in tissues as well as its high affinity for dioxygen, which may limit its oxygen-releasing ability, argue against it. The ferrous/deoxygenated form exhibits a nitrite reductase activity and it could produce nitric oxide which in turn inhibits cellular respiration in response to hypoxia. In its ferrous/deoxygenated state, it may also exhibit GDI (Guanine nucleotide Dissociation Inhibitor) activity toward heterotrimeric G-alpha proteins, thereby regulating signal transduction to facilitate neuroprotective responses in the wake of hypoxia and associated oxidative stress. The sequence is that of Neuroglobin from Oryctolagus cuniculus (Rabbit).